An 825-amino-acid polypeptide reads, in one-letter code: Breast cancer anti-estrogen resistance protein 3 homolog (825 aa).

Position 2 is an N-acetylalanine (alanine 2). Phosphoserine is present on residues serine 32, serine 78, serine 83, serine 182, and serine 290. A disordered region spans residues 40–84 (EAYPDVSIHGTLPRKKKGPPPIRSCDSASHMGTLPHSKSPRQSSP). The SH2 domain occupies 154-253 (WYHGRIPRQV…QSGAIIFQPI (100 aa)). The disordered stretch occupies residues 300 to 320 (DHSLPRGNLLRNKDKSGSQPA). Lysine 334 is modified (N6-methyllysine). A phosphoserine mark is found at serine 358, serine 363, and serine 375. Arginine 442 bears the Omega-N-methylarginine mark. Phosphoserine is present on serine 471. The region spanning 548–818 (DARVIAQHML…TALSRKLEPP (271 aa)) is the Ras-GEF domain. A mediates the interaction with BCAR1/p130CAS region spans residues 744–748 (LATAR).

As to quaternary structure, part of a complex comprised of PTPRA, BCAR1, BCAR3 and SRC; the formation of the complex is dependent on integrin mediated-tyrosine phosphorylation of PTPRA. Within the complex, interacts (via SH2 domain) with PTPRA (when phosphorylated on 'Tyr-792'). Interacts (via Ras-GEF domain) with BCAR1. Interacts (via Ras-GEF domain) with NEDD9. Interacts with PTK2/FAK1. Interacts with PTPN1. Interacts (via SH2 domain) with EGFR (when tyrosine-phosphorylated). Phosphorylated on tyrosine residues.

It localises to the cytoplasm. The protein localises to the cell junction. Its subcellular location is the focal adhesion. Acts as an adapter protein downstream of several growth factor receptors to promote cell proliferation, migration, and redistribution of actin fibers. Specifically involved in INS/insulin signaling pathway by mediating MAPK1/ERK2-MAPK3/ERK1 activation and DNA synthesis. Promotes insulin-mediated membrane ruffling. In response to vasoconstrictor peptide EDN1, involved in the activation of RAP1 downstream of PTK2B via interaction with phosphorylated BCAR1. Inhibits cell migration and invasion via regulation of TGFB-mediated matrix digestion, actin filament rearrangement, and inhibition of invadopodia activity. May inhibit TGFB/SMAD signaling, via facilitating BCAR1 and SMAD2 and/or SMAD3 interaction. Regulates EGF-induced DNA synthesis. Required for the maintenance of ocular lens morphology and structural integrity, potentially via regulation of focal adhesion complex signaling. Acts upstream of PTPRA to regulate the localization of BCAR1 and PTPRA to focal adhesions, via regulation of SRC-mediated phosphorylation of PTPRA. Positively regulates integrin-induced tyrosine phosphorylation of BCAR1. Acts as a guanine nucleotide exchange factor (GEF) for small GTPases RALA, RAP1A and RRAS. However, in a contrasting study, lacks GEF activity towards RAP1. This Rattus norvegicus (Rat) protein is Breast cancer anti-estrogen resistance protein 3 homolog.